The primary structure comprises 42 residues: Iota-conotoxin-like R11.16 (42 aa).

4 cysteine pairs are disulfide-bonded: Cys5–Cys19, Cys12–Cys22, Cys18–Cys27, and Cys21–Cys36.

It belongs to the conotoxin I1 superfamily. As to expression, expressed by the venom duct.

Its subcellular location is the secreted. In terms of biological role, iota-conotoxins bind to voltage-gated sodium channels (Nav) and act as agonists by shifting the voltage-dependence of activation to more hyperpolarized levels. Produces general excitatory symptoms. This chain is Iota-conotoxin-like R11.16, found in Conus radiatus (Rayed cone).